Reading from the N-terminus, the 550-residue chain is Carboxylesterase 4A (550 aa).

The N-terminal stretch at 1 to 20 is a signal peptide; it reads MNWILCLSLTLLLVVQTAWG. C88 and C116 form a disulfide bridge. Residue S221 is the Acyl-ester intermediate of the active site. Residues C273 and C284 are joined by a disulfide bond. Residue N276 is glycosylated (N-linked (GlcNAc...) asparagine). The active-site Charge relay system is E353. N386 carries an N-linked (GlcNAc...) asparagine glycan. H465 functions as the Charge relay system in the catalytic mechanism.

The protein belongs to the type-B carboxylesterase/lipase family.

Its subcellular location is the secreted. Probable carboxylesterase. This is Carboxylesterase 4A (CES4A) from Bos taurus (Bovine).